A 507-amino-acid chain; its full sequence is Nuclear poly(A) polymerase 3 (507 aa).

Residues 79–81 (YGS), 91–94 (SDID), aspartate 147, lysine 208, tyrosine 217, and 226–227 (GV) each bind ATP. Positions 92, 94, and 147 each coordinate Mg(2+).

Belongs to the poly(A) polymerase family. As to quaternary structure, monomer. Forms a complex with cleavage and polyadenylation specificity factor (CPSF) subunits FIPS5 and CPSF30. Mg(2+) serves as cofactor. The cofactor is Mn(2+). As to expression, expressed in leaves (mostly in petioles and tips), cotyledon, roots (tips, vascular tissue of the radicle, and throughout the root tissue excluding the elongation zone), stems, and flowers (restricted to the stigma and the pollen in mature anthers). Active in the primary and secondary root systems.

It is found in the nucleus. It carries out the reaction RNA(n) + ATP = RNA(n)-3'-adenine ribonucleotide + diphosphate. Its function is as follows. Essential protein. Polymerase that creates the 3'-poly(A) tail of mRNA's. Also required for the endoribonucleolytic cleavage reaction at some polyadenylation sites. May acquire specificity through interaction with a cleavage and polyadenylation specificity factor (CPSF) at its C-terminus. The chain is Nuclear poly(A) polymerase 3 from Arabidopsis thaliana (Mouse-ear cress).